Here is a 448-residue protein sequence, read N- to C-terminus: Acyl-lipid (9-3)-desaturase (448 aa).

The region spanning 6 to 90 (KKYITSDELK…LKDYSVSEVS (85 aa)) is the Cytochrome b5 heme-binding domain. Positions 41 and 64 each coordinate heme. Helical transmembrane passes span 112 to 132 (IMFA…YGVL) and 137 to 157 (VLVH…SGWI). The Histidine box-1 motif lies at 159–163 (HDAGH). A helical transmembrane segment spans residues 172 to 192 (LNKFMGIFAANCLSGISIGWW). The short motif at 196-200 (HNAHH) is the Histidine box-2 element. 3 consecutive transmembrane segments (helical) span residues 212–232 (LQYI…TSHF), 254–274 (FYPI…IMLL), and 286–306 (LLGC…LPNW). The Histidine box-3 motif lies at 373–377 (QIEHH).

The protein belongs to the fatty acid desaturase type 1 family.

The protein resides in the endoplasmic reticulum membrane. It carries out the reaction (9Z,12Z,15Z)-octadecatrienoyl-containing glycerolipid + 2 Fe(II)-[cytochrome b5] + O2 + 2 H(+) = (6Z,9Z,12Z,15Z)-octadecatetraenoyl-containing glycerolipid + 2 Fe(III)-[cytochrome b5] + 2 H2O. It catalyses the reaction a (9Z,12Z)-octadecadienoyl-containing glycerolipid + 2 Fe(II)-[cytochrome b5] + O2 + 2 H(+) = (6Z,9Z,12Z)-octadecatrienoyl-containing glycerolipid + 2 Fe(III)-[cytochrome b5] + 2 H2O. The protein operates within lipid metabolism; polyunsaturated fatty acid biosynthesis. Fatty acid desaturase able to introduce a delta(6)-double bond into delta(9)-unsaturated fatty-acid substrates. Can use both linoleic acid (18:2(9Z,12Z)) and alpha-linolenic acid (18:3(9Z,12Z,15Z)) as substrates. In Borago officinalis (Bourrache), this protein is Acyl-lipid (9-3)-desaturase.